The sequence spans 190 residues: Segregation and condensation protein B (190 aa).

Belongs to the ScpB family. Homodimer. Homodimerization may be required to stabilize the binding of ScpA to the Smc head domains. Component of a cohesin-like complex composed of ScpA, ScpB and the Smc homodimer, in which ScpA and ScpB bind to the head domain of Smc. The presence of the three proteins is required for the association of the complex with DNA.

Its subcellular location is the cytoplasm. In terms of biological role, participates in chromosomal partition during cell division. May act via the formation of a condensin-like complex containing Smc and ScpA that pull DNA away from mid-cell into both cell halves. The protein is Segregation and condensation protein B of Bacillus cereus (strain AH187).